Consider the following 155-residue polypeptide: Protein-export protein SecB (155 aa).

This sequence belongs to the SecB family. As to quaternary structure, homotetramer, a dimer of dimers. One homotetramer interacts with 1 SecA dimer.

The protein resides in the cytoplasm. In terms of biological role, one of the proteins required for the normal export of preproteins out of the cell cytoplasm. It is a molecular chaperone that binds to a subset of precursor proteins, maintaining them in a translocation-competent state. It also specifically binds to its receptor SecA. In Citrobacter koseri (strain ATCC BAA-895 / CDC 4225-83 / SGSC4696), this protein is Protein-export protein SecB.